A 354-amino-acid polypeptide reads, in one-letter code: Holliday junction branch migration complex subunit RuvB (354 aa).

The segment at 4 to 190 is large ATPase domain (RuvB-L); that stretch reads TDKLAAERII…FGIVARLEFY (187 aa). Residues Leu29, Arg30, Gly71, Lys74, Thr75, Thr76, 137–139, Arg180, Tyr190, and Arg227 contribute to the ATP site; that span reads EDY. Thr75 is a binding site for Mg(2+). The tract at residues 191 to 261 is small ATPAse domain (RuvB-S); the sequence is NAEELARIVT…VADAALKMLD (71 aa). A head domain (RuvB-H) region spans residues 264–354; that stretch reads AVGFDLMDRK…LPGLWDSAAT (91 aa). Arg300, Arg319, and Arg324 together coordinate DNA.

The protein belongs to the RuvB family. Homohexamer. Forms an RuvA(8)-RuvB(12)-Holliday junction (HJ) complex. HJ DNA is sandwiched between 2 RuvA tetramers; dsDNA enters through RuvA and exits via RuvB. An RuvB hexamer assembles on each DNA strand where it exits the tetramer. Each RuvB hexamer is contacted by two RuvA subunits (via domain III) on 2 adjacent RuvB subunits; this complex drives branch migration. In the full resolvosome a probable DNA-RuvA(4)-RuvB(12)-RuvC(2) complex forms which resolves the HJ.

It is found in the cytoplasm. It catalyses the reaction ATP + H2O = ADP + phosphate + H(+). The RuvA-RuvB-RuvC complex processes Holliday junction (HJ) DNA during genetic recombination and DNA repair, while the RuvA-RuvB complex plays an important role in the rescue of blocked DNA replication forks via replication fork reversal (RFR). RuvA specifically binds to HJ cruciform DNA, conferring on it an open structure. The RuvB hexamer acts as an ATP-dependent pump, pulling dsDNA into and through the RuvAB complex. RuvB forms 2 homohexamers on either side of HJ DNA bound by 1 or 2 RuvA tetramers; 4 subunits per hexamer contact DNA at a time. Coordinated motions by a converter formed by DNA-disengaged RuvB subunits stimulates ATP hydrolysis and nucleotide exchange. Immobilization of the converter enables RuvB to convert the ATP-contained energy into a lever motion, pulling 2 nucleotides of DNA out of the RuvA tetramer per ATP hydrolyzed, thus driving DNA branch migration. The RuvB motors rotate together with the DNA substrate, which together with the progressing nucleotide cycle form the mechanistic basis for DNA recombination by continuous HJ branch migration. Branch migration allows RuvC to scan DNA until it finds its consensus sequence, where it cleaves and resolves cruciform DNA. This Paraburkholderia phytofirmans (strain DSM 17436 / LMG 22146 / PsJN) (Burkholderia phytofirmans) protein is Holliday junction branch migration complex subunit RuvB.